The chain runs to 76 residues: Spore germination protein-like protein YdzR (76 aa).

The protein belongs to the GerPA/GerPF family.

The sequence is that of Spore germination protein-like protein YdzR (ydzR) from Bacillus subtilis (strain 168).